A 639-amino-acid polypeptide reads, in one-letter code: Elongation factor 4 (639 aa).

Residues T39–V221 form the tr-type G domain. Residues D51–T56 and N168–D171 contribute to the GTP site.

The protein belongs to the TRAFAC class translation factor GTPase superfamily. Classic translation factor GTPase family. LepA subfamily.

It localises to the cell membrane. It carries out the reaction GTP + H2O = GDP + phosphate + H(+). In terms of biological role, required for accurate and efficient protein synthesis under certain stress conditions. May act as a fidelity factor of the translation reaction, by catalyzing a one-codon backward translocation of tRNAs on improperly translocated ribosomes. Back-translocation proceeds from a post-translocation (POST) complex to a pre-translocation (PRE) complex, thus giving elongation factor G a second chance to translocate the tRNAs correctly. Binds to ribosomes in a GTP-dependent manner. The protein is Elongation factor 4 of Frankia casuarinae (strain DSM 45818 / CECT 9043 / HFP020203 / CcI3).